Consider the following 469-residue polypeptide: Beta-1,3-xylanase (469 aa).

The first 22 residues, 1-22 (MKKLAKMISIATLGACAFSAHA), serve as a signal peptide directing secretion. Residues 23–293 (LDGKLVPNEG…LKGFTYINAD (271 aa)) form the GH26 domain. Glu-138 acts as the Proton donor in catalysis. The active-site Nucleophile is the Glu-234. Positions 352–374 (DNGGDNGGDNGGDNGGDNGGDNG) are enriched in gly residues. The tract at residues 352 to 380 (DNGGDNGGDNGGDNGGDNGGDNGGTEPPE) is disordered. Residues 377–469 (EPPENCQDDF…NITFTTQVCN (93 aa)) are carbohydrate binding module (CBM). Disulfide bonds link Cys-382–Cys-468 and Cys-413–Cys-418.

Belongs to the glycosyl hydrolase 26 family.

The enzyme catalyses Random hydrolysis of (1-&gt;3)-beta-D-glycosidic linkages in (1-&gt;3)-beta-D-xylans.. Completely inhibited by CuCl(2), FeCl(3), HgCl(2) and N-bromosuccinimide. Moderately inhibited by AgCl, AlCl(3), Pb(CH(3)COO)(2) and dithiothreitol. BaCl(2), CaCl(2), KCl, MgCl(2), MnCl(2), NaCl, ZnCl(2), ethylenediaminetetraacetic acid, N-ethylmaleimide, iodoacetic acid and p-chloromercuribenzoic acid have little or no effect on activity. In terms of biological role, catalyzes the hydrolysis of beta-1,3-xylan into oligosaccharides, mainly xylotriose and xylobiose with smaller amounts of xylotetraose, xylose, xylopentaose and xylohexaose. Does not hydrolyze xylobiose, p-nitrophenyl-beta-xyloside, beta-1,4-xylan, carboxymethylcellulose, curdlan, glucomannan or beta-1,4-mannan. This is Beta-1,3-xylanase from Alcaligenes sp.